The sequence spans 538 residues: Pentatricopeptide repeat-containing protein At1g33350 (538 aa).

PPR repeat units follow at residues 87–123, 125–159, 160–191, 192–226, 227–253, 259–293, 294–324, 325–359, 363–398, and 399–433; these read NTHLYAAVLTAYSSSLPLHASSAFSFFRLMVNRSVPR, NHFIYPLVLKSTPYLSSAFSTPLVHTHLFKSGFHL, YVVVQTALLHSYASSVSHITLARQLFDEMSER, NVVSWTAMLSGYARSGDISNAVALFEDMPERDVPS, WNAILAACTQNGLFLEAVSLFRRMINE, NEVTVVCVLSACAQTGTLQLAKGIHAFAYRRDLSS, DVFVSNSLVDLYGKCGNLEEASSVFKMASKK, SLTAWNSMINCFALHGRSEEAIAVFEEMMKLNIND, DHITFIGLLNACTHGGLVSKGRGYFDLMTNRFGIEP, and RIEHYGCLIDLLGRAGRFDEALEVMSTMKMKADEA. The segment at 434–509 is type E motif; it reads IWGSLLNACK…PPGWSRIEID (76 aa).

Belongs to the PPR family. PCMP-E subfamily.

The polypeptide is Pentatricopeptide repeat-containing protein At1g33350 (PCMP-E57) (Arabidopsis thaliana (Mouse-ear cress)).